A 434-amino-acid chain; its full sequence is Putative magnesium transporter MRS2-D (434 aa).

2 disordered regions span residues 126 to 171 (AASP…DGEA) and 279 to 311 (EASE…AGGG). Positions 279 to 291 (EASELEDHSSRDE) are enriched in basic and acidic residues. Helical transmembrane passes span 367-387 (GILL…TGVF) and 405-425 (FPCA…AALL).

This sequence belongs to the CorA metal ion transporter (MIT) (TC 1.A.35.5) family.

The protein localises to the membrane. Its function is as follows. Putative magnesium transporter. The protein is Putative magnesium transporter MRS2-D (MRS2-D) of Oryza sativa subsp. japonica (Rice).